Reading from the N-terminus, the 635-residue chain is Frizzled and smoothened-like protein C (635 aa).

A signal peptide spans 1–20 (MKFKLIIFIIIIYIIKILKS). Over 21 to 244 (EILNEFGYGL…NKWVQMYKMS (224 aa)) the chain is Extracellular. Positions 32–166 (DENLKCLSFI…LTKYGYTENN (135 aa)) constitute an FZ domain. 2 disulfides stabilise this stretch: cysteine 37–cysteine 108 and cysteine 50–cysteine 101. N-linked (GlcNAc...) asparagine glycosylation is found at asparagine 65, asparagine 141, asparagine 156, asparagine 185, and asparagine 203. A helical membrane pass occupies residues 245 to 265 (IVLSTLSFICSIYNIITFGLL). The Cytoplasmic segment spans residues 266–275 (SKLKSKYNLC). A helical membrane pass occupies residues 276 to 296 (ITFFSVSTVLMSLMDIVTYGI). Residues 297-314 (GYEELLCPESGRYAIQSD) are Extracellular-facing. Residues 315–335 (VACGVTGAFFHIGITTGVLWW) traverse the membrane as a helical segment. At 336–356 (TTMSICLYSEVKRFKMISFRY) the chain is on the cytoplasmic side. A helical membrane pass occupies residues 357-377 (IIIFNSVISLILLIIPLSGQA). Residues 378 to 398 (FMSGNGSLGCWIRKTWYANGT) are Extracellular-facing. Asparagine 382 and asparagine 396 each carry an N-linked (GlcNAc...) asparagine glycan. A helical transmembrane segment spans residues 399-419 (FWIPCGISLFIGAICIVLVIY). Residues 420–440 (EIFKISRNLSKDNKPLMFQIR) lie on the Cytoplasmic side of the membrane. A helical membrane pass occupies residues 441–461 (PFLCVLLVGGSFLYLFIFYFN). Residues 462–496 (NERNLDKYKAAIPSYVQCLLSSDENGEDCLTDGPG) are Extracellular-facing. Residues 497–517 (FGAYFTFYFFTRLFGITSFSI) traverse the membrane as a helical segment. The Cytoplasmic portion of the chain corresponds to 518-635 (YGTSKIARDI…SSKDSNTNSF (118 aa)). The segment covering 559-594 (SISGSNQKRFNRNGSNFNMKQNKSNPNDSISLSVVE) has biased composition (polar residues). The tract at residues 559–635 (SISGSNQKRF…SSKDSNTNSF (77 aa)) is disordered. Positions 594 to 623 (ESTKKQDTENELESNIETKENRSTDISIEN) form a coiled coil. Positions 623 to 635 (NTTSSKDSNTNSF) are enriched in low complexity.

This sequence belongs to the G-protein coupled receptor Fz/Smo family.

Its subcellular location is the membrane. The chain is Frizzled and smoothened-like protein C (fslC) from Dictyostelium discoideum (Social amoeba).